The primary structure comprises 432 residues: Tyrosine-protein phosphatase non-receptor type 1 (432 aa).

Residue Met-1 is modified to N-acetylmethionine. A Tyrosine-protein phosphatase domain is found at 3–277; the sequence is MEKEFEQIDK…RFSYLAVIEG (275 aa). A Phosphotyrosine modification is found at Tyr-20. Ser-50 is subject to Phosphoserine; by PKB/AKT1, CLK1 and CLK2. Tyr-66 is subject to Phosphotyrosine; by EGFR. Substrate-binding positions include Asp-181 and 215–221; that span reads CSAGIGR. Cys-215 acts as the Phosphocysteine intermediate in catalysis. A Cysteine persulfide modification is found at Cys-215. Position 215 is an S-nitrosocysteine; in reversibly inhibited form (Cys-215). Phosphoserine; by CLK1 and CLK2 is present on residues Ser-242 and Ser-243. Gln-262 contributes to the substrate binding site. Residues 297-322 are disordered; sequence EDLEPPPEHVPPPPRPPKRTLEPHNG. 3 positions are modified to phosphoserine: Ser-335, Ser-362, and Ser-364. The interval 350–402 is disordered; it reads SRAPSIAVHSMSSMSQDTEVRKRMVGGGLQSAQASVPTEEELSPTEEEQKAHR. A Phosphothreonine modification is found at Thr-367.

This sequence belongs to the protein-tyrosine phosphatase family. Non-receptor class 1 subfamily. Interacts with EPHA3 (phosphorylated); dephosphorylates EPHA3 and may regulate its trafficking and function. Interacts with MET. Interacts with NCK1. Post-translationally, ser-50 is the major site of phosphorylation as compared to Ser-242 and Ser-243. Activated by phosphorylation at Ser-50. S-nitrosylation of Cys-215 inactivates the enzyme activity. In terms of processing, sulfhydration at Cys-215 following endoplasmic reticulum stress inactivates the enzyme activity, promoting EIF2AK3/PERK activity. Found in several tissues including central nervous system, liver and kidney. A high level of expression was found in the hippocampus.

The protein resides in the endoplasmic reticulum membrane. The catalysed reaction is O-phospho-L-tyrosyl-[protein] + H2O = L-tyrosyl-[protein] + phosphate. Its function is as follows. Tyrosine-protein phosphatase which acts as a regulator of endoplasmic reticulum unfolded protein response. Mediates dephosphorylation of EIF2AK3/PERK; inactivating the protein kinase activity of EIF2AK3/PERK. May play an important role in CKII- and p60c-src-induced signal transduction cascades. May regulate the EFNA5-EPHA3 signaling pathway which modulates cell reorganization and cell-cell repulsion. May also regulate the hepatocyte growth factor receptor signaling pathway through dephosphorylation of MET. The sequence is that of Tyrosine-protein phosphatase non-receptor type 1 (Ptpn1) from Rattus norvegicus (Rat).